The following is a 78-amino-acid chain: MICOS complex subunit MIC10 (78 aa).

The residue at position 2 (Ser2) is an N-acetylserine. The helical transmembrane segment at Ala17–Phe36 threads the bilayer. Residues Lys37–Gln78 lie on the Mitochondrial intermembrane side of the membrane.

The protein belongs to the MICOS complex subunit Mic10 family. As to quaternary structure, component of the mitochondrial contact site and cristae organizing system (MICOS) complex, composed of at least MICOS10/MIC10, CHCHD3/MIC19, CHCHD6/MIC25, APOOL/MIC27, IMMT/MIC60, APOO/MIC23/MIC26 and MICOS13/MIC13. This complex was also known under the names MINOS or MitOS complex. The MICOS complex associates with mitochondrial outer membrane proteins SAMM50, MTX1 and MTX2 (together described as components of the mitochondrial outer membrane sorting assembly machinery (SAM) complex) and DNAJC11, mitochondrial inner membrane protein TMEM11 and with HSPA9. The MICOS and SAM complexes together with DNAJC11 are part of a large protein complex spanning both membranes termed the mitochondrial intermembrane space bridging (MIB) complex. Interacts with IMMT/MIC60 and MICOS13/MIC13. Interacts with APOO/MIC23/MIC26 and APOOL/MIC27. Interacts with ARMC1.

Its subcellular location is the mitochondrion inner membrane. In terms of biological role, component of the MICOS complex, a large protein complex of the mitochondrial inner membrane that plays crucial roles in the maintenance of crista junctions, inner membrane architecture, and formation of contact sites to the outer membrane. This Homo sapiens (Human) protein is MICOS complex subunit MIC10.